Reading from the N-terminus, the 457-residue chain is Dihydrolipoyllysine-residue acetyltransferase component of pyruvate dehydrogenase complex, mitochondrial (457 aa).

The transit peptide at 1 to 30 (MLSAALRRRVLAPTHSALRTGFAAHVVRHY) directs the protein to the mitochondrion. The 77-residue stretch at 36 to 112 (HQVIKMPALS…PVGSPIAVLV (77 aa)) folds into the Lipoyl-binding domain. Lys-77 is subject to N6-lipoyllysine. Residues 129-168 (AGGDAAKPAAPKKEEKSESKSESASAPEPTPEPQQYQSQG) form a disordered region. A compositionally biased stretch (basic and acidic residues) spans 139–149 (PKKEEKSESKS). Lys-148 bears the N6-crotonyllysine mark. Residues 179-216 (NISASAKRLAREKGISIDGLKGTGKNGQITEEDVKKAI) form the Peripheral subunit-binding (PSBD) domain. Residues His-430 and Asp-434 contribute to the active site.

The protein belongs to the 2-oxoacid dehydrogenase family. Eukaryotic pyruvate dehydrogenase (PDH) complexes are organized as a core consisting of the oligomeric dihydrolipoamide acetyl-transferase (E2), around which are arranged multiple copies of pyruvate dehydrogenase (E1), dihydrolipoamide dehydrogenase (E3) and protein X (E3BP) bound by non-covalent bonds. Interacts with SIR5; the interaction is direct. (R)-lipoate is required as a cofactor. Post-translationally, decrotonylated at 'Lys-148' by SIR5, which inhibits the activity of the pyruvate dehydrogenase complex (PDC).

Its subcellular location is the mitochondrion matrix. The catalysed reaction is N(6)-[(R)-dihydrolipoyl]-L-lysyl-[protein] + acetyl-CoA = N(6)-[(R)-S(8)-acetyldihydrolipoyl]-L-lysyl-[protein] + CoA. Its function is as follows. The pyruvate dehydrogenase complex catalyzes the overall conversion of pyruvate to acetyl-CoA and CO(2). High pyruvate dehydrogenase complex activity is required for sufficient energy production during germination of conidia. This is Dihydrolipoyllysine-residue acetyltransferase component of pyruvate dehydrogenase complex, mitochondrial from Fusarium oxysporum f. sp. lycopersici (strain 4287 / CBS 123668 / FGSC 9935 / NRRL 34936) (Fusarium vascular wilt of tomato).